The chain runs to 390 residues: GTPase Obg (390 aa).

Residues 1 to 159 enclose the Obg domain; it reads MKFVDEASVK…RELRLELLLL (159 aa). The OBG-type G domain occupies 160–333; it reads ADVGMLGLPN…LCFKLGEFME (174 aa). Residues 166–173, 191–195, 213–216, 283–286, and 314–316 contribute to the GTP site; these read GLPNAGKS, FTTLI, DIPG, NKVD, and SAV. Ser-173 and Thr-193 together coordinate Mg(2+).

This sequence belongs to the TRAFAC class OBG-HflX-like GTPase superfamily. OBG GTPase family. Monomer. Mg(2+) is required as a cofactor.

Its subcellular location is the cytoplasm. An essential GTPase which binds GTP, GDP and possibly (p)ppGpp with moderate affinity, with high nucleotide exchange rates and a fairly low GTP hydrolysis rate. Plays a role in control of the cell cycle, stress response, ribosome biogenesis and in those bacteria that undergo differentiation, in morphogenesis control. This chain is GTPase Obg, found in Vibrio atlanticus (strain LGP32) (Vibrio splendidus (strain Mel32)).